The sequence spans 400 residues: ATP phosphoribosyltransferase regulatory subunit (400 aa).

Belongs to the class-II aminoacyl-tRNA synthetase family. HisZ subfamily. In terms of assembly, heteromultimer composed of HisG and HisZ subunits.

The protein resides in the cytoplasm. Its pathway is amino-acid biosynthesis; L-histidine biosynthesis; L-histidine from 5-phospho-alpha-D-ribose 1-diphosphate: step 1/9. Functionally, required for the first step of histidine biosynthesis. May allow the feedback regulation of ATP phosphoribosyltransferase activity by histidine. This Hahella chejuensis (strain KCTC 2396) protein is ATP phosphoribosyltransferase regulatory subunit.